The following is a 426-amino-acid chain: Histidine--tRNA ligase (426 aa).

It belongs to the class-II aminoacyl-tRNA synthetase family. As to quaternary structure, homodimer.

It is found in the cytoplasm. It catalyses the reaction tRNA(His) + L-histidine + ATP = L-histidyl-tRNA(His) + AMP + diphosphate + H(+). In Streptococcus equi subsp. zooepidemicus (strain MGCS10565), this protein is Histidine--tRNA ligase.